The primary structure comprises 1042 residues: Probable serine/threonine protein kinase IRE4 (1042 aa).

Basic and acidic residues-rich tracts occupy residues 1–10, 102–115, and 314–327; these read MAEENRKDRG, EEIK…GKDE, and QRNE…RRDK. Disordered regions lie at residues 1 to 75, 90 to 115, and 297 to 327; these read MAEE…GTKL, PPKY…GKDE, and WGST…RRDK. The C2H2-type; atypical zinc-finger motif lies at 402–421; it reads CRICEEEVPLFHLEPHSYIC. The 286-residue stretch at 670-955 folds into the Protein kinase domain; the sequence is FEIIKPISRG…AAEVKSHPFF (286 aa). ATP-binding positions include 676–684 and Lys-699; that span reads ISRGAFGKV. The active-site Proton acceptor is the Asp-793. The interval 830 to 850 is disordered; the sequence is ESDVSPRTNSHHFQKNQEEER. Position 854 is a phosphoserine (Ser-854). The region spanning 956-1042 is the AGC-kinase C-terminal domain; the sequence is QGVDWENLAL…KLFFLLLCVF (87 aa).

It belongs to the protein kinase superfamily. AGC Ser/Thr protein kinase family.

It catalyses the reaction L-seryl-[protein] + ATP = O-phospho-L-seryl-[protein] + ADP + H(+). The catalysed reaction is L-threonyl-[protein] + ATP = O-phospho-L-threonyl-[protein] + ADP + H(+). This chain is Probable serine/threonine protein kinase IRE4, found in Arabidopsis thaliana (Mouse-ear cress).